The sequence spans 469 residues: Solute carrier family 52, riboflavin transporter, member 3 (469 aa).

Topologically, residues 1–6 (MALLTH) are cytoplasmic. The helical transmembrane segment at 7–27 (LLVCTFGMGSWVAINGLWVEL) threads the bilayer. The Extracellular portion of the chain corresponds to 28–43 (PLLVTELPEGWYLPSY). A helical transmembrane segment spans residues 44-64 (LTMVIQLANIGPLLVTLLHHF). Over 65-71 (QPSCLSE) the chain is Cytoplasmic. The chain crosses the membrane as a helical span at residues 72–92 (VPIIFTVLAVGTVACALFAFL). The Extracellular segment spans residues 93–105 (WNVTSWVLDGRHS). Asn-94 is a glycosylation site (N-linked (GlcNAc...) asparagine). Residues 106–126 (IAFMVLTFFLALVDCTSSVTF) form a helical membrane-spanning segment. The Cytoplasmic segment spans residues 127–137 (LPFMSRLPACY). A helical membrane pass occupies residues 138-158 (LTTFFVGEGLSSLLPALVALA). The Extracellular segment spans residues 159-220 (QGSGLTTCVN…SRYLPANFSP (62 aa)). N-linked (GlcNAc...) asparagine glycosylation occurs at Asn-168. Residues 221-241 (LVFFLLLSFMMACCLAAFFLL) form a helical membrane-spanning segment. At 242–297 (QRQPRPRESSIEDLLTSQVTLHSIRPREGDDLGPPDPGPSSKAQGLPEEKTASDHP) the chain is on the cytoplasmic side. Ser-251 carries the phosphoserine modification. The interval 266–290 (RPREGDDLGPPDPGPSSKAQGLPEE) is disordered. Residues 298–318 (AHLAFIYVLVAFVNALTNGVL) form a helical membrane-spanning segment. Over 319-335 (PSVQTYSCLSYGPVAYH) the chain is Extracellular. The chain crosses the membrane as a helical span at residues 336 to 356 (LSATLSSMANPLACFLSMFLP). Over 357–361 (HRSLP) the chain is Cytoplasmic. Residues 362 to 382 (FLGVLTVLGTGFGAYNMAMAV) form a helical membrane-spanning segment. Residues 383-396 (MSPCPLMQGHWAGE) lie on the Extracellular side of the membrane. Residues 397–417 (ILIVASWVLFIGCLSYVKVML) traverse the membrane as a helical segment. The Cytoplasmic segment spans residues 418–427 (GVILRDRSRS). The helical transmembrane segment at 428-448 (ALVWCGAAVQLGSLLGALLMF) threads the bilayer. The Extracellular segment spans residues 449-469 (PLVNVLRLFSSADFCSLQCSA).

It belongs to the riboflavin transporter family.

The protein resides in the cell membrane. The catalysed reaction is riboflavin(in) = riboflavin(out). Its function is as follows. Plasma membrane transporter mediating the uptake by cells of the water soluble vitamin B2/riboflavin that plays a key role in biochemical oxidation-reduction reactions of the carbohydrate, lipid, and amino acid metabolism. This chain is Solute carrier family 52, riboflavin transporter, member 3 (SLC52A3), found in Ailuropoda melanoleuca (Giant panda).